Consider the following 209-residue polypeptide: Uracil phosphoribosyltransferase (209 aa).

Residues Arg79, Arg104, and 131–139 (DPMLATGGS) each bind 5-phospho-alpha-D-ribose 1-diphosphate. Uracil contacts are provided by residues Ile194 and 199-201 (GDA). Residue Asp200 participates in 5-phospho-alpha-D-ribose 1-diphosphate binding.

Belongs to the UPRTase family. Mg(2+) is required as a cofactor.

The enzyme catalyses UMP + diphosphate = 5-phospho-alpha-D-ribose 1-diphosphate + uracil. It participates in pyrimidine metabolism; UMP biosynthesis via salvage pathway; UMP from uracil: step 1/1. Allosterically activated by GTP. Its function is as follows. Catalyzes the conversion of uracil and 5-phospho-alpha-D-ribose 1-diphosphate (PRPP) to UMP and diphosphate. This Anoxybacillus flavithermus (strain DSM 21510 / WK1) protein is Uracil phosphoribosyltransferase.